A 299-amino-acid polypeptide reads, in one-letter code: MPT51/MPB51 antigen (299 aa).

The N-terminal stretch at 1–26 (MKGRSALLRALWIAALSFGLGGVAVA) is a signal peptide.

The protein belongs to the mycobacterial A85 antigen family. In terms of assembly, homodimer.

The protein localises to the secreted. May have a role in host tissue attachment, whereby ligands may include the serum protein fibronectin and small sugars. This chain is MPT51/MPB51 antigen (mpt51), found in Mycobacterium bovis (strain ATCC BAA-935 / AF2122/97).